We begin with the raw amino-acid sequence, 1157 residues long: DNA-directed RNA polymerase subunit beta (1157 aa).

It belongs to the RNA polymerase beta chain family. The RNAP catalytic core consists of 2 alpha, 1 beta, 1 beta' and 1 omega subunit. When a sigma factor is associated with the core the holoenzyme is formed, which can initiate transcription.

The enzyme catalyses RNA(n) + a ribonucleoside 5'-triphosphate = RNA(n+1) + diphosphate. DNA-dependent RNA polymerase catalyzes the transcription of DNA into RNA using the four ribonucleoside triphosphates as substrates. The chain is DNA-directed RNA polymerase subunit beta from Tropheryma whipplei (Whipple's bacillus).